A 299-amino-acid polypeptide reads, in one-letter code: Protease HtpX homolog (299 aa).

2 helical membrane-spanning segments follow: residues Ile-15–Phe-35 and Gly-39–Phe-59. A Zn(2+)-binding site is contributed by His-143. The active site involves Glu-144. A Zn(2+)-binding site is contributed by His-147. A run of 2 helical transmembrane segments spans residues Ile-158–Trp-178 and Ile-198–Val-218. Glu-227 lines the Zn(2+) pocket.

The protein belongs to the peptidase M48B family. Requires Zn(2+) as cofactor.

The protein resides in the cell membrane. The sequence is that of Protease HtpX homolog from Streptococcus pneumoniae (strain Taiwan19F-14).